A 530-amino-acid chain; its full sequence is G2/mitotic-specific cyclin-B (530 aa).

The interval alanine 76–asparagine 152 is disordered. Residues proline 121–proline 144 show a composition bias toward low complexity. Serine 137 bears the Phosphoserine mark.

This sequence belongs to the cyclin family. Cyclin AB subfamily. As to quaternary structure, interacts with the protein kinase Cdk1 to form a serine/threonine kinase holoenzyme complex also known as maturation promoting factor (MPF). The cyclin subunit imparts substrate specificity to the complex.

Its function is as follows. Essential for the control of the cell cycle at the G2/M (mitosis) transition. In Drosophila melanogaster (Fruit fly), this protein is G2/mitotic-specific cyclin-B (CycB).